The chain runs to 306 residues: Glutaminase (306 aa).

Positions 61, 111, 157, 164, 188, 240, and 258 each coordinate substrate.

Belongs to the glutaminase family. Homotetramer.

The enzyme catalyses L-glutamine + H2O = L-glutamate + NH4(+). This is Glutaminase from Psychrobacter cryohalolentis (strain ATCC BAA-1226 / DSM 17306 / VKM B-2378 / K5).